Reading from the N-terminus, the 62-residue chain is DNA-binding protein 7 (62 aa).

This sequence belongs to the 7 kDa DNA-binding/endoribonuclease P2 family. In terms of assembly, monomer.

It localises to the cytoplasm. Can constrain negative DNA supercoils. May be involved in maintaining the integrity of the genome at high temperature. The polypeptide is DNA-binding protein 7 (Metallosphaera cuprina (strain Ar-4)).